Reading from the N-terminus, the 831-residue chain is MGELFRSEEMTLAQLFLQSEAAYCCVSELGELGKVQFRDLNPDVNVFQRKFVNEVRRCEEMDRKLRFVEKEVKKANISILDTGENPEVPFPRDIIDLEANFEKIEIELKEINTNQEALKRNFLELTELKFILRKTQQFFDEMADPDLLEESSTLLEPSEMGRGAPLRLGFVAGVINRERIPTFERMLWRVCRGNVFLRQAQIENPLEDPVTGDSVHKSVFIIFFQGDQLKNRVKKICEGFRASLYPCPETPQERKEMATGVNTRIEDLQMVLNQTEDHRQRVLQAAAKSLRVWFIKVRKMKAIYHTLNLCNIDVTQKCLIAEVWCPVADLDSIQFALRRGTEHSGSTVPSILNRMQTNQTPPTYNKTNKFTYGFQNLVDAYGIGSYREINPAPYTIITFPFLFAVMFGDFGHGILMTLFAVWMVVRESRILSQKIDNELFSMMFSGRYIILLMGLFSTYTGLIYNDCFSKALNLFGSSWSVRPMFTDTWSEDLLKHTSVLQLNPNVTGVFNGPYPFGIDPIWSLATNKLTFLNSFKMKMSVILGIIHMIFGVALSVLNHIYFKKPLNIYLSFIPEMIFMTTLFGYLVILIIYKWCAYDVSTSMVAPSLLIHFINMFLFSYQDTSLPMLYKGQMGLQCFLVVCAIICVPWMLVLKPLILRRQYLRRKHLGTHNFGGIRVGNGPTEEDAEIIQHDQLSMHSDEEEEFDFGDTVVHQAIHTIEYCLGCISNTASYLRLWALSLAHAQLSEVLWTMVMHIGLNIRSLGGGIALVFIFSAFATLTIAILLIMEGLSAFLHALRLHWVEFRNKFYMGTGFKFLPFSFETIWEGKFDD.

Over 1 to 388 (MGELFRSEEM…DAYGIGSYRE (388 aa)) the chain is Cytoplasmic. The helical transmembrane segment at 389 to 407 (INPAPYTIITFPFLFAVMF) threads the bilayer. Residues 408–409 (GD) are Vacuolar-facing. A helical transmembrane segment spans residues 410 to 426 (FGHGILMTLFAVWMVVR). Residues 427-441 (ESRILSQKIDNELFS) lie on the Cytoplasmic side of the membrane. Residues 442–471 (MMFSGRYIILLMGLFSTYTGLIYNDCFSKA) form a helical membrane-spanning segment. Residues 472-534 (LNLFGSSWSV…ATNKLTFLNS (63 aa)) are Vacuolar-facing. A helical membrane pass occupies residues 535–554 (FKMKMSVILGIIHMIFGVAL). Residues 555-572 (SVLNHIYFKKPLNIYLSF) are Cytoplasmic-facing. Residues 573 to 593 (IPEMIFMTTLFGYLVILIIYK) form a helical membrane-spanning segment. Residues 594–638 (WCAYDVSTSMVAPSLLIHFINMFLFSYQDTSLPMLYKGQMGLQCF) are Vacuolar-facing. The chain crosses the membrane as a helical span at residues 639 to 658 (LVVCAIICVPWMLVLKPLIL). Over 659–718 (RRQYLRRKHLGTHNFGGIRVGNGPTEEDAEIIQHDQLSMHSDEEEEFDFGDTVVHQAIHT) the chain is Cytoplasmic. Residues 719 to 743 (IEYCLGCISNTASYLRLWALSLAHA) form a helical membrane-spanning segment. At 744–764 (QLSEVLWTMVMHIGLNIRSLG) the chain is on the vacuolar side. The helical transmembrane segment at 765-803 (GGIALVFIFSAFATLTIAILLIMEGLSAFLHALRLHWVE) threads the bilayer. Topologically, residues 804–831 (FRNKFYMGTGFKFLPFSFETIWEGKFDD) are cytoplasmic.

This sequence belongs to the V-ATPase 116 kDa subunit family. V-ATPase is a heteromultimeric enzyme made up of two complexes: the ATP-hydrolytic V1 complex and the proton translocation V0 complex. The V1 complex consists of three catalytic AB heterodimers that form a heterohexamer, three peripheral stalks each consisting of EG heterodimers, one central rotor including subunits D and F, and the regulatory subunits C and H. The proton translocation complex V0 consists of the proton transport subunit a, a ring of proteolipid subunits c9c'', rotary subunit d, subunits e and f, and two accessory subunits.

The protein resides in the cytoplasmic vesicle. The protein localises to the clathrin-coated vesicle membrane. Its subcellular location is the secretory vesicle. It is found in the synaptic vesicle membrane. It localises to the melanosome. Its function is as follows. Subunit of the V0 complex of vacuolar(H+)-ATPase (V-ATPase), a multisubunit enzyme composed of a peripheral complex (V1) that hydrolyzes ATP and a membrane integral complex (V0) that translocates protons. V-ATPase is responsible for acidifying and maintaining the pH of intracellular compartments and in some cell types, is targeted to the plasma membrane, where it is responsible for acidifying the extracellular environment. Required for assembly and activity of the vacuolar ATPase. The sequence is that of V-type proton ATPase 116 kDa subunit a1 (atp6v0a1) from Xenopus laevis (African clawed frog).